The chain runs to 195 residues: MTGSTETRQKEVKEPQVDVSDDSDNEAVEQELTEEQRRVAEAAGLGDHIDKQAKQSRSEKKARKLFSKLGLKQVTGVSRVCIRKSKNILFVINKPDVFKSPGSDTYIIFGEAKIEDLTQHAQMSAIENLKPTREAPQLKTVEEDENEDVEEDSTGIEEKDIELVISQANTTRNKAIRALKEADNDIVNAIMSLTM.

Disordered stretches follow at residues 1 to 59 (MTGS…SRSE) and 132 to 153 (TREA…EEDS). Residues 7–16 (TRQKEVKEPQ) show a composition bias toward basic and acidic residues. The segment covering 19-33 (VSDDSDNEAVEQELT) has biased composition (acidic residues). The segment covering 47–59 (DHIDKQAKQSRSE) has biased composition (basic and acidic residues). The 66-residue stretch at 56-121 (SRSEKKARKL…AKIEDLTQHA (66 aa)) folds into the NAC-A/B domain. Residues 142–153 (EEDENEDVEEDS) show a composition bias toward acidic residues.

The protein belongs to the NAC-alpha family. As to quaternary structure, may be part of the nascent polypeptide-associated complex (NAC), which is a heterodimer of icd-2 and icd-1 (via NAC-A/B domains).

Its subcellular location is the cytoplasm. Its function is as follows. May prevent inappropriate targeting of non-secretory polypeptides to the endoplasmic reticulum (ER). Plays a role in the response to heat stress. This is Nascent polypeptide-associated complex subunit alpha from Caenorhabditis elegans.